The following is a 640-amino-acid chain: 1,4-alpha-glucan branching enzyme GlgB (640 aa).

Catalysis depends on Asp318, which acts as the Nucleophile. The Proton donor role is filled by Glu371.

This sequence belongs to the glycosyl hydrolase 13 family. GlgB subfamily. In terms of assembly, monomer.

The catalysed reaction is Transfers a segment of a (1-&gt;4)-alpha-D-glucan chain to a primary hydroxy group in a similar glucan chain.. The protein operates within glycan biosynthesis; glycogen biosynthesis. Its function is as follows. Catalyzes the formation of the alpha-1,6-glucosidic linkages in glycogen by scission of a 1,4-alpha-linked oligosaccharide from growing alpha-1,4-glucan chains and the subsequent attachment of the oligosaccharide to the alpha-1,6 position. This is 1,4-alpha-glucan branching enzyme GlgB from Francisella tularensis subsp. tularensis (strain FSC 198).